The following is a 72-amino-acid chain: Small ribosomal subunit protein eS17 (72 aa).

Belongs to the eukaryotic ribosomal protein eS17 family.

The protein is Small ribosomal subunit protein eS17 of Nanoarchaeum equitans (strain Kin4-M).